Reading from the N-terminus, the 313-residue chain is Olfactory receptor 56A4 (313 aa).

At 1–28 (MASPSNDSTAPVSEFLLICFPNFQSWQH) the chain is on the extracellular side. N-linked (GlcNAc...) asparagine glycosylation occurs at Asn6. Residues 29-49 (WLSLPLSLLFLLAMGANTTLL) traverse the membrane as a helical segment. The Cytoplasmic portion of the chain corresponds to 50–57 (ITIQLEAS). A helical membrane pass occupies residues 58–78 (LHQPLYYLLSLLSLLDIVLCL). At 79–102 (TVIPKVLAIFWFDLRSISFPACFL) the chain is on the extracellular side. Cys100 and Cys192 are disulfide-bonded. Residues 103 to 123 (QMFIMNSFLTMESCTFMVMAY) form a helical membrane-spanning segment. Over 124 to 142 (DRYVAICHPLRYPSIITDQ) the chain is Cytoplasmic. A helical membrane pass occupies residues 143–163 (FVARAVVFVIARNAFVSLPVP). The Extracellular portion of the chain corresponds to 164–199 (MLSARLRYCAGNIIKNCICSNLSVSKLSCDDITFNQ). Residue Asn184 is glycosylated (N-linked (GlcNAc...) asparagine). Residues 200-220 (LYQFVAGWTLLGSDLILIVIS) traverse the membrane as a helical segment. The Cytoplasmic segment spans residues 221-240 (YSFILKVVLRIKAEGAVAKA). The chain crosses the membrane as a helical span at residues 241 to 261 (LSTCGSHFILILFFSTVLLVL). At 262–276 (VITNLARKRIPPDVP) the chain is on the extracellular side. The helical transmembrane segment at 277 to 297 (ILLNILHHLIPPALNPIVYGV) threads the bilayer. Residues 298-313 (RTKEIKQGIQNLLKRL) lie on the Cytoplasmic side of the membrane.

The protein belongs to the G-protein coupled receptor 1 family.

The protein resides in the cell membrane. Functionally, odorant receptor. The protein is Olfactory receptor 56A4 (OR56A4) of Homo sapiens (Human).